Here is a 249-residue protein sequence, read N- to C-terminus: 5'-nucleotidase SurE (249 aa).

Residues Asp-8, Asp-9, Ser-39, and Asn-91 each coordinate a divalent metal cation.

This sequence belongs to the SurE nucleotidase family. Requires a divalent metal cation as cofactor.

The protein resides in the cytoplasm. The enzyme catalyses a ribonucleoside 5'-phosphate + H2O = a ribonucleoside + phosphate. In terms of biological role, nucleotidase that shows phosphatase activity on nucleoside 5'-monophosphates. This is 5'-nucleotidase SurE from Pseudomonas fluorescens (strain Pf0-1).